The sequence spans 323 residues: AA9 family lytic polysaccharide monooxygenase B (323 aa).

Positions 1–18 (MKSFTLTTLAALAGNAAA) are cleaved as a signal peptide. 2 residues coordinate Cu(2+): H19 and H97. C56 and C191 are oxidised to a cystine. H177 and Q186 together coordinate O2. Residue Y188 coordinates Cu(2+). The CBM1 domain maps to 286–323 (CTVQKYQQCGGQGYTGCTNCASGSTCSAVSPPYYSQCV).

The protein belongs to the polysaccharide monooxygenase AA9 family. It depends on Cu(2+) as a cofactor.

The protein localises to the secreted. It carries out the reaction [(1-&gt;4)-beta-D-glucosyl]n+m + reduced acceptor + O2 = 4-dehydro-beta-D-glucosyl-[(1-&gt;4)-beta-D-glucosyl]n-1 + [(1-&gt;4)-beta-D-glucosyl]m + acceptor + H2O.. Its activity is regulated as follows. Is able to utilize various natural phenolic compounds as reducing agents. Most of these reducing agents are present in plants, either free or as lignin building blocks, such as sinapic acid, or as flavonoids such as catechin and dopamine. Phenolic compounds with 1,2-benzenediol and 1,2,3-benzenetriol moieties yield the highest release of oxidized and non-oxidized glucooligosaccharides from cellulose compared to monophenols or sulfur-containing compounds. Its function is as follows. Lytic polysaccharide monooxygenase (LPMO) that depolymerizes crystalline and amorphous polysaccharides via the oxidation of scissile alpha- or beta-(1-4)-glycosidic bonds, yielding C1 oxidation products. Catalysis by LPMOs requires the reduction of the active-site copper from Cu(II) to Cu(I) by a reducing agent and H(2)O(2) or O(2) as a cosubstrate. Is active on regenerated amorphous cellulose (RAC). This Thermothelomyces thermophilus (strain ATCC 42464 / BCRC 31852 / DSM 1799) (Sporotrichum thermophile) protein is AA9 family lytic polysaccharide monooxygenase B.